The following is a 1281-amino-acid chain: Zinc finger transcription factor Trps1 (1281 aa).

Positions 1–198 (MVRKKNPPLR…VPSDGGVRLN (198 aa)) are disordered. K29 participates in a covalent cross-link: Glycyl lysine isopeptide (Lys-Gly) (interchain with G-Cter in SUMO2). Positions 40 to 49 (DQMSENTDQS) are enriched in polar residues. Positions 53–63 (ELNHKEEHSLH) are enriched in basic and acidic residues. A Glycyl lysine isopeptide (Lys-Gly) (interchain with G-Cter in SUMO2) cross-link involves residue K76. 2 positions are modified to phosphoserine: S90 and S127. Residues 148–162 (LETKEDQKMSPKATE) are compositionally biased toward basic and acidic residues. Polar residues predominate over residues 163 to 189 (ETGQAQSGQANCQGLSPVSVASKNPQV). Phosphoserine occurs at positions 178 and 216. The C2H2-type 1; atypical zinc finger occupies 222–247 (FKCNICGYGYYGNDPTDLIKHFRKYH). Residue K263 forms a Glycyl lysine isopeptide (Lys-Gly) (interchain with G-Cter in SUMO2) linkage. Residues 333–358 (FRCKFCNFTYMGNSSTELEQHFLQTH) form a C2H2-type 2; atypical zinc finger. The disordered stretch occupies residues 365–394 (SLPSSEVAKPSEKNSNKSIPALQSSDSGDL). Residues 380–391 (NKSIPALQSSDS) are compositionally biased toward polar residues. Residues K418, K457, K474, and K488 each participate in a glycyl lysine isopeptide (Lys-Gly) (interchain with G-Cter in SUMO2) cross-link. The tract at residues 483–512 (QNDLAKSSEGETMTKTDKSSSGAKKKDFSS) is disordered. The segment covering 488–512 (KSSEGETMTKTDKSSSGAKKKDFSS) has biased composition (basic and acidic residues). The C2H2-type 3; atypical zinc finger occupies 614–637 (HQCHQCSFTTPDVDVLLFHYESVH). Positions 635–819 (SVHESQASDV…SLGLLTPVSG (185 aa)) are mediates interaction with GLI3. K645 is covalently cross-linked (Glycyl lysine isopeptide (Lys-Gly) (interchain with G-Cter in SUMO2)). C2H2-type zinc fingers lie at residues 666–689 (HSCT…RRAH) and 692–715 (YKCR…NTVH). Residue K737 forms a Glycyl lysine isopeptide (Lys-Gly) (interchain with G-Cter in SUMO2) linkage. Position 751 is a phosphothreonine (T751). K755 participates in a covalent cross-link: Glycyl lysine isopeptide (Lys-Gly) (interchain with G-Cter in SUMO2). K766 is covalently cross-linked (Glycyl lysine isopeptide (Lys-Gly) (interchain with G-Cter in SUMO1); alternate). K766 participates in a covalent cross-link: Glycyl lysine isopeptide (Lys-Gly) (interchain with G-Cter in SUMO2); alternate. Glycyl lysine isopeptide (Lys-Gly) (interchain with G-Cter in SUMO2) cross-links involve residues K825, K850, K877, and K879. The disordered stretch occupies residues 856–887 (APAGGEKSGALPQQYPASGENKSKDESQSLLR). Residues 896 to 920 (CANCLTTKTSLWRKNANGGYVCNAC) form a GATA-type zinc finger. Residues K925, K937, and K965 each participate in a glycyl lysine isopeptide (Lys-Gly) (interchain with G-Cter in SUMO2) cross-link. Residues 961-977 (EQLNKQQRGSNEEQVNG) are compositionally biased toward polar residues. A disordered region spans residues 961–1000 (EQLNKQQRGSNEEQVNGSPLERRSEDHLTESHQREIPLPS). Residue S978 is modified to Phosphoserine. Positions 980 to 995 (LERRSEDHLTESHQRE) are enriched in basic and acidic residues. The interval 985–1184 (EDHLTESHQR…PTANGASKEK (200 aa)) is mediates interaction with RNF4. Glycyl lysine isopeptide (Lys-Gly) (interchain with G-Cter in SUMO2) cross-links involve residues K1003, K1012, K1030, and K1040. The tract at residues 1039–1080 (IKSPQESTGDPGNSSSVSEGKGSSERGSPIEKYMRPAKHPNY) is disordered. Polar residues predominate over residues 1040-1049 (KSPQESTGDP). Position 1041 is a phosphoserine (S1041). The span at 1050–1059 (GNSSSVSEGK) shows a compositional bias: low complexity. Residues 1060 to 1072 (GSSERGSPIEKYM) show a composition bias toward basic and acidic residues. S1066 carries the post-translational modification Phosphoserine. K1070 is covalently cross-linked (Glycyl lysine isopeptide (Lys-Gly) (interchain with G-Cter in SUMO2)). S1085 is modified (phosphoserine). Positions 1163 to 1281 (PLDLAIKHSR…QVEKNGKPKE (119 aa)) are transcriptional repressor domain. The tract at residues 1168-1196 (IKHSRPGPTANGASKEKTKAPPNVKNEGP) is disordered. Residues K1192 and K1201 each participate in a glycyl lysine isopeptide (Lys-Gly) (interchain with G-Cter in SUMO2); alternate cross-link. Glycyl lysine isopeptide (Lys-Gly) (interchain with G-Cter in SUMO); alternate cross-links involve residues K1192 and K1201. Residue K1201 forms a Glycyl lysine isopeptide (Lys-Gly) (interchain with G-Cter in SUMO1); alternate linkage. 2 C2H2-type zinc fingers span residues 1215–1237 (TKCV…MSCH) and 1243–1267 (FQCS…RGLH).

As to quaternary structure, interacts with RNF4; regulates TRPS1 repressor activity. Interacts specifically with the activator form of GLI3 (GLI3A) but not with the repressor form (GLI3R). In terms of processing, sumoylated. Sumoylation in the repressor domain inhibits the transcription repression activity. Sumoylation on Lys-1201 is the major site. Appears to be sumoylated on multiple sites. In terms of tissue distribution, ubiquitously expressed in the adult. Found in fetal brain, lung, kidney, liver, spleen and thymus. More highly expressed in androgen-dependent than in androgen-independent prostate cancer cells.

It localises to the nucleus. Transcriptional repressor. Binds specifically to GATA sequences and represses expression of GATA-regulated genes at selected sites and stages in vertebrate development. Regulates chondrocyte proliferation and differentiation. Executes multiple functions in proliferating chondrocytes, expanding the region of distal chondrocytes, activating proliferation in columnar cells and supporting the differentiation of columnar into hypertrophic chondrocytes. This is Zinc finger transcription factor Trps1 (TRPS1) from Homo sapiens (Human).